The primary structure comprises 294 residues: Protoheme IX farnesyltransferase (294 aa).

The next 9 helical transmembrane spans lie at 22 to 42 (VTQLAVFCAVIGMFLATPDLP), 46 to 66 (IVIAATIGIWLLAGAAFAINC), 89 to 109 (ITVPQTLVFSGVIGGAGMWVL), 116 to 136 (LTMWLTFATFVGYAVIYTIIL), 143 to 163 (NIVIGGLSGAMPPALGWAAVA), 170 to 190 (AWILVLIIFIWTPPHFWALAL), 211 to 231 (AFTQFHIWLYTIALVATTMLP), 232 to 252 (FAVGMSGLIYLVVAAVLDVIF), and 272 to 292 (FTYSIIYLSLLFAALLVDHYL).

It belongs to the UbiA prenyltransferase family. Protoheme IX farnesyltransferase subfamily.

Its subcellular location is the cell inner membrane. It catalyses the reaction heme b + (2E,6E)-farnesyl diphosphate + H2O = Fe(II)-heme o + diphosphate. The protein operates within porphyrin-containing compound metabolism; heme O biosynthesis; heme O from protoheme: step 1/1. Its function is as follows. Converts heme B (protoheme IX) to heme O by substitution of the vinyl group on carbon 2 of heme B porphyrin ring with a hydroxyethyl farnesyl side group. The chain is Protoheme IX farnesyltransferase from Herminiimonas arsenicoxydans.